Consider the following 305-residue polypeptide: Olfactory receptor 4F5 (305 aa).

Over 1-18 the chain is Extracellular; the sequence is MVTEFIFLGLSDSQELQT. A helical transmembrane segment spans residues 19-42; sequence FLFMLFFVFYGGIVFGNLLIVITV. Over 43–50 the chain is Cytoplasmic; it reads VSDSHLHS. The chain crosses the membrane as a helical span at residues 51–72; the sequence is PMYFLLANLSLIDLSLSSVTAP. Over 73–93 the chain is Extracellular; it reads KMITDFFSQRKVISFKGCLVQ. Cysteine 90 and cysteine 182 are joined by a disulfide. The chain crosses the membrane as a helical span at residues 94–113; that stretch reads IFLLHFFGGSEMVILIAMGF. Over 114–132 the chain is Cytoplasmic; it reads DRYIAICKPLHYTTIMCGN. A helical membrane pass occupies residues 133–151; that stretch reads ACVGIMAVTWGIGFLHSVS. The Extracellular portion of the chain corresponds to 152–188; it reads QLAFAVHLLFCGPNEVDSFYCDLPRVIKLACTDTYRL. The chain crosses the membrane as a helical span at residues 189–212; sequence DIMVIANSGVLTVCSFVLLIISYT. The Cytoplasmic segment spans residues 213–228; the sequence is IILMTIQHRPLDKSSK. A helical membrane pass occupies residues 229-251; it reads ALSTLTAHITVVLLFFGPCVFIY. The Extracellular portion of the chain corresponds to 252–262; that stretch reads AWPFPIKSLDK. Residues 263–282 traverse the membrane as a helical segment; the sequence is FLAVFYSVITPLLNPIIYTL. Topologically, residues 283 to 305 are cytoplasmic; that stretch reads RNKDMKTAIRQLRKWDAHSSVKF.

The protein belongs to the G-protein coupled receptor 1 family.

The protein localises to the cell membrane. Odorant receptor. This is Olfactory receptor 4F5 (OR4F5) from Homo sapiens (Human).